The sequence spans 294 residues: 4-hydroxy-tetrahydrodipicolinate synthase (294 aa).

Residue threonine 47 participates in pyruvate binding. Tyrosine 135 functions as the Proton donor/acceptor in the catalytic mechanism. The Schiff-base intermediate with substrate role is filled by lysine 163. Valine 205 is a binding site for pyruvate.

This sequence belongs to the DapA family. As to quaternary structure, homotetramer; dimer of dimers.

The protein localises to the cytoplasm. The enzyme catalyses L-aspartate 4-semialdehyde + pyruvate = (2S,4S)-4-hydroxy-2,3,4,5-tetrahydrodipicolinate + H2O + H(+). It participates in amino-acid biosynthesis; L-lysine biosynthesis via DAP pathway; (S)-tetrahydrodipicolinate from L-aspartate: step 3/4. Functionally, catalyzes the condensation of (S)-aspartate-beta-semialdehyde [(S)-ASA] and pyruvate to 4-hydroxy-tetrahydrodipicolinate (HTPA). The sequence is that of 4-hydroxy-tetrahydrodipicolinate synthase from Rickettsia canadensis (strain McKiel).